A 315-amino-acid chain; its full sequence is ATP synthase gamma chain (315 aa).

It belongs to the ATPase gamma chain family. F-type ATPases have 2 components, CF(1) - the catalytic core - and CF(0) - the membrane proton channel. CF(1) has five subunits: alpha(3), beta(3), gamma(1), delta(1), epsilon(1). CF(0) has three main subunits: a, b and c.

Its subcellular location is the cellular thylakoid membrane. Produces ATP from ADP in the presence of a proton gradient across the membrane. The gamma chain is believed to be important in regulating ATPase activity and the flow of protons through the CF(0) complex. The polypeptide is ATP synthase gamma chain (Trichormus variabilis (strain ATCC 29413 / PCC 7937) (Anabaena variabilis)).